A 146-amino-acid chain; its full sequence is Ribonuclease H (146 aa).

In terms of domain architecture, RNase H type-1 spans 1-143 (MKKRVTIYTD…CDELARQAIK (143 aa)). 4 residues coordinate Mg(2+): Asp10, Glu48, Asp70, and Asp135.

The protein belongs to the RNase H family. Monomer. It depends on Mg(2+) as a cofactor.

It localises to the cytoplasm. It catalyses the reaction Endonucleolytic cleavage to 5'-phosphomonoester.. Its function is as follows. Endonuclease that specifically degrades the RNA of RNA-DNA hybrids. This is Ribonuclease H from Chlorobium limicola (strain DSM 245 / NBRC 103803 / 6330).